The primary structure comprises 540 residues: Cytochrome P450 monooxygenase ORF5 (540 aa).

A helical membrane pass occupies residues 48–68 (YHALGTAIALFACACAYALVA). N-linked (GlcNAc...) asparagine glycosylation is found at Asn-376 and Asn-460. Cys-483 contacts heme.

It belongs to the cytochrome P450 family. Requires heme as cofactor.

Its subcellular location is the membrane. Its pathway is sesquiterpene biosynthesis. In terms of biological role, cytochrome P450 monooxygenase; part of the gene cluster that mediates the biosynthesis of PR-toxin, a bicyclic sesquiterpene belonging to the eremophilane class and acting as a mycotoxin. The first step of the pathway is catalyzed by the aristolochene synthase which performs the cyclization of trans,trans-farnesyl diphosphate (FPP) to the bicyclic sesquiterpene aristolochene. Following the formation of aristolochene, the non-oxygenated aristolochene is converted to the trioxygenated intermediate eremofortin B, via 7-epi-neopetasone. This conversion appears to involve three enzymes, a hydroxysterol oxidase-like enzyme, the quinone-oxidase prx3 that forms the quinone-type-structure in the bicyclic nucleus of aristolochene with the C8-oxo group and the C-3 hydroxyl group, and the P450 monooxygenase ORF6 that introduces the epoxide at the double bond between carbons 1 and 2. No monoxy or dioxy-intermediates have been reported to be released to the broth, so these three early oxidative reactions may be coupled together. Eremofortin B is further oxidized by another P450 monooxygenase, that introduces a second epoxide between carbons 7 and 11 prior to acetylation to eremofortin A by the acetyltransferase ORF8. The second epoxidation may be performed by a second P450 monooxygenase. After the acetylation step, eremofortin A is converted to eremofortin C and then to PR-toxin. First the conversion of eremofortin A to eremofortin C proceeds by oxidation of the side chain of the molecule at C-12 and is catalyzed by the short-chain oxidoreductase prx1. The cytochrome P450 monooxygenase ORF6 is probably also involved in this step. The primary alcohol formed at C-12 is finally oxidized by the short-chain alcohol dehydrogenase prx4 that forms PR-toxin. This chain is Cytochrome P450 monooxygenase ORF5, found in Penicillium roqueforti (strain FM164).